Consider the following 63-residue polypeptide: Beta-defensin 5 (63 aa).

An N-terminal signal peptide occupies residues 1–22; the sequence is MRIHYLLFSFLLVLLSPLSVFT. Gln-23 is modified (pyrrolidone carboxylic acid). 3 disulfide bridges follow: Cys-31–Cys-59, Cys-38–Cys-52, and Cys-42–Cys-60.

It belongs to the beta-defensin family.

The protein localises to the secreted. Functionally, has antibacterial activity. The polypeptide is Beta-defensin 5 (Defb5) (Rattus norvegicus (Rat)).